The following is a 395-amino-acid chain: Phosphoglycerate kinase (395 aa).

Substrate-binding positions include 21-23, Arg36, 59-62, Arg114, and Arg147; these read DIN and HFGR. ATP contacts are provided by residues Lys197, Glu322, and 352 to 355; that span reads GGDT.

Belongs to the phosphoglycerate kinase family. As to quaternary structure, monomer.

The protein resides in the cytoplasm. It catalyses the reaction (2R)-3-phosphoglycerate + ATP = (2R)-3-phospho-glyceroyl phosphate + ADP. It participates in carbohydrate degradation; glycolysis; pyruvate from D-glyceraldehyde 3-phosphate: step 2/5. The sequence is that of Phosphoglycerate kinase from Roseobacter denitrificans (strain ATCC 33942 / OCh 114) (Erythrobacter sp. (strain OCh 114)).